A 244-amino-acid chain; its full sequence is MEIVSMREMLKAGVHFGHQTRYWNPKMKPFIFGIRNRVHIINLEKTLPMFHFALSELKKIALKKGRILFVGTKKAASKGIKEVAINCEQFYVNHRWLGGMLTNWKTVRQSIKRLKDLEIESKDGTFSKLTKKEALIRSRELFKLENSLGGIKNMGGLPDCLFVIDAAHENIAITEANNLGIPVFSIVDTNSNPDGVDYIIPGNDDAIRSVNLYLKSIMLTISKINNQNSLDKVFIDTKNSTNIE.

The protein belongs to the universal ribosomal protein uS2 family.

The protein is Small ribosomal subunit protein uS2 of Buchnera aphidicola subsp. Acyrthosiphon pisum (strain 5A).